We begin with the raw amino-acid sequence, 353 residues long: GDP-mannose transporter (353 aa).

The Cytoplasmic portion of the chain corresponds to 1 to 31; the sequence is MGLLLSYLFGYIFYSVNKKFHIMEKFGASNS. Residues 32–52 traverse the membrane as a helical segment; that stretch reads IVNNGPVSIFAYCASSILMTV. Residues 53-66 are Lumenal-facing; that stretch reads TNKFVVGAYEFNLN. The chain crosses the membrane as a helical span at residues 67–87; it reads FFLLAVQAAVCLVTIATLKGL. The Cytoplasmic segment spans residues 88 to 102; the sequence is GIITYRQFNKDEAKK. A helical membrane pass occupies residues 103–122; sequence WFPIAFLLVLMIYTSSKALQ. Over 123–125 the chain is Lumenal; that stretch reads YLS. A helical membrane pass occupies residues 126–148; that stretch reads IPVYTIFKNLTIILIAYGEVIWF. The Cytoplasmic segment spans residues 149–154; sequence GGKVTT. Residues 155–172 form a helical membrane-spanning segment; that stretch reads MALGSFILMVLSSVIAYY. The Lumenal portion of the chain corresponds to 173-187; that stretch reads GDTAETGEKTAEMHL. A helical transmembrane segment spans residues 188–208; it reads LYLGYAWMFTNCFSSAAFVLI. Residues 209-227 lie on the Cytoplasmic side of the membrane; the sequence is MRKRIKLTNFKDFDTMYYN. Residues 228–248 form a helical membrane-spanning segment; sequence NLLSLPLLLVFSFLFEDWSSV. Residues 249 to 262 lie on the Lumenal side of the membrane; that stretch reads NLNKNFPPDNRNTT. Asn260 carries N-linked (GlcNAc...) asparagine glycosylation. Residues 263 to 283 form a helical membrane-spanning segment; the sequence is IFVMILSGASSVGISYCSAWC. Topologically, residues 284–290 are cytoplasmic; it reads VRVTSST. A helical transmembrane segment spans residues 291 to 313; the sequence is TYSMVGALNKLPIALSGLVFFNA. The Lumenal segment spans residues 314 to 316; the sequence is AVN. The helical transmembrane segment at 317 to 336 threads the bilayer; sequence FWSVSSIFVGFLAGVFYAVA. Topologically, residues 337–353 are cytoplasmic; sequence KQKQQKENAQQLPVANK.

It belongs to the TPT transporter family. SLC35D subfamily. Homooligomer.

The protein resides in the golgi apparatus membrane. It localises to the cytoplasmic vesicle membrane. It is found in the endoplasmic reticulum membrane. Functionally, involved in the import of GDP-mannose from the cytoplasm into the Golgi lumen. This is GDP-mannose transporter (VRG4) from Meyerozyma guilliermondii (strain ATCC 6260 / CBS 566 / DSM 6381 / JCM 1539 / NBRC 10279 / NRRL Y-324) (Yeast).